Reading from the N-terminus, the 236-residue chain is Purine nucleoside phosphorylase DeoD-type (236 aa).

Histidine 5 lines the a purine D-ribonucleoside pocket. Phosphate-binding positions include glycine 21, arginine 25, arginine 44, and 88-91 (RVGS). A purine D-ribonucleoside-binding positions include 180 to 182 (EME) and 204 to 205 (SD). Aspartate 205 serves as the catalytic Proton donor.

Belongs to the PNP/UDP phosphorylase family. In terms of assembly, homohexamer; trimer of homodimers.

The enzyme catalyses a purine D-ribonucleoside + phosphate = a purine nucleobase + alpha-D-ribose 1-phosphate. It catalyses the reaction a purine 2'-deoxy-D-ribonucleoside + phosphate = a purine nucleobase + 2-deoxy-alpha-D-ribose 1-phosphate. In terms of biological role, catalyzes the reversible phosphorolytic breakdown of the N-glycosidic bond in the beta-(deoxy)ribonucleoside molecules, with the formation of the corresponding free purine bases and pentose-1-phosphate. The polypeptide is Purine nucleoside phosphorylase DeoD-type (Psychromonas ingrahamii (strain DSM 17664 / CCUG 51855 / 37)).